A 746-amino-acid chain; its full sequence is MEGPEIQFSEAVIDNGRFGKRTIRFETGRLAQQAAGAAMVYIDDDTALLSATTAGKQPREGFDFFPLTVDVEERMYAAGRIPGSFFRREGRPSTEAILACRLMDRPLRPAFVKGLRNEVQIVVTVLAINPDELYDVVAINASSMSTQLSGLPFSGPIGGVRVALIEDQWVAFPRHSEMEKAVFNMVVAGRVAGDDVAIMMVEAEATDNSWNLIKENGATAPTEEIVSEGLEAAKPFIKALCEAQADLAARAAKPTVEFPIFLDYQDDIFEAVNAAAAAKLTEVFQIADKQERDNASDALKDEVVSSLSSKFDGREKEISAAFRSVTKQVVRQRILKDQIRIDGRGLTDIRQLTAEVEVLPRVHGSAIFERGETQIMGVTTLNMLKMEQQIDSLSPVTRKRYMHNYNFPPYSTGETGRVGSPKRREIGHGALAERALVPVLPSREEFPYAIRQVSEALSSNGSTSMGSVCASTLSLLNAGVPLKAPVAGIAMGLVSDQVDGQTRYAALTDILGAEDAFGDMDFKVAGTSEFVTAIQLDTKLDGIPASVLAAALKQAREARLHILGVLNAAIDVPDELSEFAPRVIAVKIPVDKIGEVIGPKGKMINQIQEDTGADISIEDDGTVYIGATNGPSADAARSAINAIANPQIPEIGERYLGTVVKTTTFGAFVSLTPGKDGLLHVTELRKINDGKRVDNVDDVVSVGQKIQVEITKIDDRGKLSLSPVVAEDAAAADSAEAAEPAEAAAN.

Residues Asp515 and Asp521 each contribute to the Mg(2+) site. The region spanning 581-640 is the KH domain; sequence PRVIAVKIPVDKIGEVIGPKGKMINQIQEDTGADISIEDDGTVYIGATNGPSADAARSAI. Residues 652–724 enclose the S1 motif domain; it reads GERYLGTVVK…DRGKLSLSPV (73 aa).

It belongs to the polyribonucleotide nucleotidyltransferase family. Requires Mg(2+) as cofactor.

The protein resides in the cytoplasm. The enzyme catalyses RNA(n+1) + phosphate = RNA(n) + a ribonucleoside 5'-diphosphate. Involved in mRNA degradation. Catalyzes the phosphorolysis of single-stranded polyribonucleotides processively in the 3'- to 5'-direction. The protein is Polyribonucleotide nucleotidyltransferase of Renibacterium salmoninarum (strain ATCC 33209 / DSM 20767 / JCM 11484 / NBRC 15589 / NCIMB 2235).